Reading from the N-terminus, the 802-residue chain is Osmosensitive cation channel TMEM63C (802 aa).

At 1–35 (MTASPESMGQKFRNMTANECFQSRSTVLQGQPFGG) the chain is on the extracellular side. Residues 36–60 (IPTVLLLNIILWVCVVLVYSFLRKA) form a helical membrane-spanning segment. Over 61–124 (AWDYGRLALL…RDRDLINKCG (64 aa)) the chain is Cytoplasmic. 2 positions are modified to phosphoserine: Ser75 and Ser78. A helical membrane pass occupies residues 125–157 (EDARIYIMFQYHLIIFVLILCIPSLGIILPVNY). The Extracellular segment spans residues 158 to 180 (IGSALDWSSHFGRTTIVNVSTES). The chain crosses the membrane as a helical span at residues 181–205 (QFLWLHSIFAFMYFLTNFAFMGHHC). Residues 206-401 (LGFVPKKNLH…IIWKHLSIRR (196 aa)) lie on the Cytoplasmic side of the membrane. Residues 402–431 (FSWWARFIAINTSLFFLFFFLTTPAIIINT) form a helical membrane-spanning segment. At 432–446 (IDMYNVTRPIEKLQS) the chain is on the extracellular side. Residues 447–476 (PVVTQFFPSVLLWAFTVIMPLLVYFSAFLE) traverse the membrane as a helical segment. The Cytoplasmic segment spans residues 477–480 (AHWT). The chain crosses the membrane as a helical span at residues 481–517 (RSNQNLIIMYKCYIFLVFMVVILPSMGLTSLDVFLRW). The Extracellular segment spans residues 518–540 (LFDIYYLEHATIRFQCVFLPDNG). Residues 541 to 573 (AFFINYVITSALFGTGMELMRLGSLCTYCTRLF) form a helical membrane-spanning segment. Topologically, residues 574–593 (LSRSEPERVHIRKNLAMDFQ) are cytoplasmic. Residues 594–612 (FGREYAWMLNVFSVVMAYS) form a helical membrane-spanning segment. At 613–615 (ITC) the chain is on the extracellular side. The helical transmembrane segment at 616 to 640 (PIIVPFGLLYLCMKHITDRYNMYYS) threads the bilayer. Topologically, residues 641–647 (YAPTKLN) are cytoplasmic. The helical transmembrane segment at 648–676 (AQIHMAAVYQAIFAPLLGLFWMLFFSILR) threads the bilayer. Topologically, residues 677–681 (VGSLH) are extracellular. A helical transmembrane segment spans residues 682 to 702 (SITLFSLSSIIISVIIAFSGV). Topologically, residues 703–802 (FLGKFRIAQQ…EGLELEGQSH (100 aa)) are cytoplasmic. The interval 753–785 (TPASSPARHTYGTMNSQPEEGEEESGLRGFARE) is disordered.

The protein belongs to the CSC1 (TC 1.A.17) family. In terms of assembly, monomer. As to expression, expressed in podocytes of kidney glomeruli.

The protein resides in the endoplasmic reticulum membrane. It localises to the cell membrane. It carries out the reaction Ca(2+)(in) = Ca(2+)(out). Acts as an osmosensitive cation channel preferentially activated upon hypotonic stress. In contrast to TMEM63B, does not show phospholipid scramblase activity. Enriched in mitochondria-ER contact sites where it may regulate the metabolite flux and organelles' morphologies in response to osmotic changes. In particular may regulate mitochondrial motility and function in motor neuron axons. Required for the functional integrity of the kidney glomerular filtration barrier. The polypeptide is Osmosensitive cation channel TMEM63C (Tmem63c) (Rattus norvegicus (Rat)).